The sequence spans 330 residues: Aspartate--ammonia ligase (330 aa).

Belongs to the class-II aminoacyl-tRNA synthetase family. AsnA subfamily.

Its subcellular location is the cytoplasm. The enzyme catalyses L-aspartate + NH4(+) + ATP = L-asparagine + AMP + diphosphate + H(+). Its pathway is amino-acid biosynthesis; L-asparagine biosynthesis; L-asparagine from L-aspartate (ammonia route): step 1/1. The protein is Aspartate--ammonia ligase of Edwardsiella ictaluri (strain 93-146).